The primary structure comprises 259 residues: MNRLYPHPIIAREGWPIIGGGLALSLLVSMCCGWWSLPFWVFTVFALQFFRDPAREIPQNPEAVLSPVDGRIVVVERARDPYRDVDALKISIFMNVFNVHSQKSPADCTVTKVVYNKGKFVNADLDKASTENERNAVLATTASGREITFVQVAGLVARRILCYTQAGAKLSRGERYGFIRFGSRVDMYLPVDAQAQVAIGDKVTGVKTVLARLPLTDSQADPVSQAASVETAANPSAEQQQIEAAAAKIQAAVQDVLKD.

The active-site Schiff-base intermediate with substrate; via pyruvic acid is the S183. A Pyruvic acid (Ser); by autocatalysis modification is found at S183.

It belongs to the phosphatidylserine decarboxylase family. PSD-A subfamily. In terms of assembly, heterodimer of a large membrane-associated beta subunit and a small pyruvoyl-containing alpha subunit. The cofactor is pyruvate. In terms of processing, is synthesized initially as an inactive proenzyme. Formation of the active enzyme involves a self-maturation process in which the active site pyruvoyl group is generated from an internal serine residue via an autocatalytic post-translational modification. Two non-identical subunits are generated from the proenzyme in this reaction, and the pyruvate is formed at the N-terminus of the alpha chain, which is derived from the carboxyl end of the proenzyme. The post-translation cleavage follows an unusual pathway, termed non-hydrolytic serinolysis, in which the side chain hydroxyl group of the serine supplies its oxygen atom to form the C-terminus of the beta chain, while the remainder of the serine residue undergoes an oxidative deamination to produce ammonia and the pyruvoyl prosthetic group on the alpha chain.

It is found in the cell membrane. It carries out the reaction a 1,2-diacyl-sn-glycero-3-phospho-L-serine + H(+) = a 1,2-diacyl-sn-glycero-3-phosphoethanolamine + CO2. The protein operates within phospholipid metabolism; phosphatidylethanolamine biosynthesis; phosphatidylethanolamine from CDP-diacylglycerol: step 2/2. Catalyzes the formation of phosphatidylethanolamine (PtdEtn) from phosphatidylserine (PtdSer). This Neisseria gonorrhoeae (strain ATCC 700825 / FA 1090) protein is Phosphatidylserine decarboxylase proenzyme.